We begin with the raw amino-acid sequence, 748 residues long: Serine/threonine-protein kinase CG17528 (748 aa).

Polar residues-rich tracts occupy residues 22–35 (QASPSATSPQSVPS) and 47–59 (EKTNQPHNVQEDN). 2 disordered regions span residues 22-41 (QASPSATSPQSVPSKANVVT) and 47-81 (EKTNQPHNVQEDNNYNRDCDSPESSSSEQDKELDD). Ser-67, Ser-70, Ser-73, Ser-87, Ser-88, and Ser-89 each carry phosphoserine. Position 91 is a phosphothreonine (Thr-91). Ser-93 is subject to Phosphoserine. Phosphothreonine is present on Thr-100. Doublecortin domains are found at residues 158-244 (LRIK…VEYN) and 313-396 (RIVT…AEDF). The 259-residue stretch at 477–735 (YSLGRIIGDG…SEDILDHSWT (259 aa)) folds into the Protein kinase domain. ATP is bound by residues 483–491 (IGDGNFAIV) and Lys-506. The active-site Proton acceptor is the Asp-598.

This sequence belongs to the protein kinase superfamily. CAMK Ser/Thr protein kinase family. CaMK subfamily.

The enzyme catalyses L-seryl-[protein] + ATP = O-phospho-L-seryl-[protein] + ADP + H(+). It carries out the reaction L-threonyl-[protein] + ATP = O-phospho-L-threonyl-[protein] + ADP + H(+). This is Serine/threonine-protein kinase CG17528 from Drosophila melanogaster (Fruit fly).